The following is a 271-amino-acid chain: MIRTLLLSALVAGALSCGYPTYEVQHDVSRVVGGQEASPNSWPWQVSLQYLSSGKWHHTCGGSLVANNWVLTAAHCISNSRTYRVLLGRHSLSTSESGSLAVQVSKLVVHEKWNAQKLSNGNDIALVKLASPVALTSKIQTACLPPAGTILPNNYPCYVTGWGRLQTNGATPDVLQQGRLLVVDYATCSSASWWGSSVKTNMVCAGGDGVTSSCNGDSGGPLNCQASNGQWQVHGIVSFGSTLGCNYPRKPSVFTRVSNYIDWINSVIAKN.

An N-terminal signal peptide occupies residues 1–16 (MIRTLLLSALVAGALS). The propeptide at 17 to 30 (CGYPTYEVQHDVSR) is activation peptide. In terms of domain architecture, Peptidase S1 spans 31–269 (VVGGQEASPN…YIDWINSVIA (239 aa)). A disulfide bond links Cys-60 and Cys-76. Active-site charge relay system residues include His-75 and Asp-123. 3 disulfides stabilise this stretch: Cys-157-Cys-224, Cys-188-Cys-204, and Cys-214-Cys-245. The active-site Charge relay system is Ser-218.

This sequence belongs to the peptidase S1 family. Elastase subfamily. As to quaternary structure, interacts with CPA1. Interacts with SERPINA1. As to expression, pancreas.

It is found in the secreted. It catalyses the reaction Preferential cleavage: Leu-|-Xaa, Met-|-Xaa and Phe-|-Xaa. Hydrolyzes elastin.. Functionally, elastase that enhances insulin signaling and might have a physiologic role in cellular glucose metabolism. Circulates in plasma and reduces platelet hyperactivation, triggers both insulin secretion and degradation, and increases insulin sensitivity. This is Chymotrypsin-like elastase family member 2A (Cela2a) from Rattus norvegicus (Rat).